Reading from the N-terminus, the 154-residue chain is Protein phosphatase 1 regulatory subunit 27 (154 aa).

2 ANK repeats span residues 63 to 92 and 96 to 125; these read SGLAALHEAVLSGNLECVKLLVKYGADIHQ and AGWTPLHIACSDGYPDIARYLISLGADRDA.

As to quaternary structure, interacts with DYSF and PPP1CA.

Functionally, inhibits phosphatase activity of protein phosphatase 1 (PP1) complexes. The protein is Protein phosphatase 1 regulatory subunit 27 (PPP1R27) of Homo sapiens (Human).